A 400-amino-acid chain; its full sequence is Nicotinate phosphoribosyltransferase (400 aa).

H220 bears the Phosphohistidine; by autocatalysis mark.

The protein belongs to the NAPRTase family. Transiently phosphorylated on a His residue during the reaction cycle. Phosphorylation strongly increases the affinity for substrates and increases the rate of nicotinate D-ribonucleotide production. Dephosphorylation regenerates the low-affinity form of the enzyme, leading to product release.

It carries out the reaction nicotinate + 5-phospho-alpha-D-ribose 1-diphosphate + ATP + H2O = nicotinate beta-D-ribonucleotide + ADP + phosphate + diphosphate. It participates in cofactor biosynthesis; NAD(+) biosynthesis; nicotinate D-ribonucleotide from nicotinate: step 1/1. Its function is as follows. Catalyzes the synthesis of beta-nicotinate D-ribonucleotide from nicotinate and 5-phospho-D-ribose 1-phosphate at the expense of ATP. The chain is Nicotinate phosphoribosyltransferase from Shigella boydii serotype 18 (strain CDC 3083-94 / BS512).